We begin with the raw amino-acid sequence, 283 residues long: Putative sugar uptake protein BC_0219 (283 aa).

The next 10 helical transmembrane spans lie at 4–21 (LLAL…LVSV), 26–48 (GAYS…MYVF), 52–71 (ALTM…WALG), 84–106 (VSTT…GVIA), 110–132 (WTTT…GVVF), 151–173 (LLTL…WYNI), 178–195 (AILP…VLTS), 208–230 (ALSG…RVGV), 234–253 (FPLS…VFLG), and 260–279 (QLIF…VLLG).

This sequence belongs to the GRP transporter (TC 2.A.7.5) family.

It is found in the cell membrane. This Bacillus cereus (strain ATCC 14579 / DSM 31 / CCUG 7414 / JCM 2152 / NBRC 15305 / NCIMB 9373 / NCTC 2599 / NRRL B-3711) protein is Putative sugar uptake protein BC_0219.